Reading from the N-terminus, the 629-residue chain is TRAF3-interacting protein 1 (629 aa).

The interval 130-511 is disordered; that stretch reads AGDKLDQKGK…RSLVSEASRK (382 aa). Residues 145–306 are compositionally biased toward basic and acidic residues; the sequence is SQDKENREGR…KIKAAEEISK (162 aa). The stretch at 220–282 forms a coiled coil; the sequence is RDREKDKTRE…RREKEKDKER (63 aa). Acidic residues predominate over residues 352–362; that stretch reads EQDETESEGEA. Over residues 394–403 the composition is skewed to low complexity; the sequence is RPSSARPAAP. The segment covering 471-511 has biased composition (basic and acidic residues); that stretch reads GDDKHGGLVKKILETKKDYESSPSSKSKEQDRSLVSEASRK. Residues 511 to 602 are a coiled coil; that stretch reads KKERELVARE…QLIKDQQDKI (92 aa).

This sequence belongs to the TRAF3IP1 family. As to quaternary structure, component of the IFT complex B, at least composed of ift20, ift22, ift25, ift27, ift46, ift52, traf3ip1/ift54, ift57, ift74, ift80, ift81, and ift88. Interacts with ift88. Interacts with il13ra1. Binds to microtubules, traf3 and disc1. Interacts with map4.

It is found in the cytoplasm. Its subcellular location is the cytoskeleton. The protein localises to the cell projection. The protein resides in the cilium. It localises to the cilium axoneme. It is found in the cilium basal body. Plays an inhibitory role on IL13 signaling by binding to IL13RA1 and recruits TRAF3 and DISC1 to the microtubules. Involved in the regulation of microtubule cytoskeleton organization. Is a negative regulator of microtubule stability, acting through the control of MAP4 levels. Involved in ciliogenesis. This is TRAF3-interacting protein 1 (traf3ip1) from Danio rerio (Zebrafish).